A 344-amino-acid chain; its full sequence is N-acetyl-gamma-glutamyl-phosphate reductase (344 aa).

Cysteine 149 is an active-site residue.

Belongs to the NAGSA dehydrogenase family. Type 1 subfamily.

It is found in the cytoplasm. It carries out the reaction N-acetyl-L-glutamate 5-semialdehyde + phosphate + NADP(+) = N-acetyl-L-glutamyl 5-phosphate + NADPH + H(+). Its pathway is amino-acid biosynthesis; L-arginine biosynthesis; N(2)-acetyl-L-ornithine from L-glutamate: step 3/4. Functionally, catalyzes the NADPH-dependent reduction of N-acetyl-5-glutamyl phosphate to yield N-acetyl-L-glutamate 5-semialdehyde. The sequence is that of N-acetyl-gamma-glutamyl-phosphate reductase from Shouchella clausii (strain KSM-K16) (Alkalihalobacillus clausii).